We begin with the raw amino-acid sequence, 65 residues long: Ovary maturating parsin (65 aa).

A compositionally biased stretch (low complexity) spans Pro-17–Ala-28. The disordered stretch occupies residues Pro-17–Arg-36.

Monomer.

Neurohormone that anticipates ovarian maturation. Acts as a true gonadotropin and stimulates vitellogenin biosynthesis. This chain is Ovary maturating parsin, found in Locusta migratoria (Migratory locust).